Here is a 507-residue protein sequence, read N- to C-terminus: GMP synthase [glutamine-hydrolyzing] (507 aa).

A Glutamine amidotransferase type-1 domain is found at 4 to 193 (KIIILDFGSQ…VVDVCGCKQD (190 aa)). Cysteine 79 functions as the Nucleophile in the catalytic mechanism. Catalysis depends on residues histidine 167 and glutamate 169. Residues 194–382 (WSPASFIEST…LGMPEHLITR (189 aa)) enclose the GMPS ATP-PPase domain. 221-227 (SGGVDSS) is an ATP binding site.

In terms of assembly, homodimer.

The catalysed reaction is XMP + L-glutamine + ATP + H2O = GMP + L-glutamate + AMP + diphosphate + 2 H(+). Its pathway is purine metabolism; GMP biosynthesis; GMP from XMP (L-Gln route): step 1/1. In terms of biological role, catalyzes the synthesis of GMP from XMP. The protein is GMP synthase [glutamine-hydrolyzing] of Bacteroides fragilis (strain ATCC 25285 / DSM 2151 / CCUG 4856 / JCM 11019 / LMG 10263 / NCTC 9343 / Onslow / VPI 2553 / EN-2).